The chain runs to 451 residues: Probable plasmid replicative DNA helicase (451 aa).

The region spanning 194–451 (QNSFFDAFPT…SKFSAIKKVW (258 aa)) is the SF4 helicase domain. 225-232 (ARPSIGKT) is an ATP binding site.

It belongs to the helicase family. DnaB subfamily. As to quaternary structure, homohexamer.

The catalysed reaction is Couples ATP hydrolysis with the unwinding of duplex DNA at the replication fork by translocating in the 5'-3' direction. This creates two antiparallel DNA single strands (ssDNA). The leading ssDNA polymer is the template for DNA polymerase III holoenzyme which synthesizes a continuous strand.. The enzyme catalyses ATP + H2O = ADP + phosphate + H(+). Functionally, a replicative DNA helicase, it participates in initiation and elongation during DNA replication. Travels ahead of the DNA replisome, separating dsDNA into templates for DNA synthesis. A processive ATP-dependent 5'-3' DNA helicase it has DNA-dependent ATPase activity. In terms of biological role, the plasmid this protein is encoded on is thought to be required for growth within mammalian cells. The polypeptide is Probable plasmid replicative DNA helicase (Chlamydia trachomatis serovar L2 (strain ATCC VR-902B / DSM 19102 / 434/Bu)).